A 122-amino-acid chain; its full sequence is Small ribosomal subunit protein uS13 (122 aa).

Residues 93 to 122 form a disordered region; the sequence is RRGLPVRGQKTKTNARTRKGPKKTIANKKK.

The protein belongs to the universal ribosomal protein uS13 family. As to quaternary structure, part of the 30S ribosomal subunit. Forms a loose heterodimer with protein S19. Forms two bridges to the 50S subunit in the 70S ribosome.

In terms of biological role, located at the top of the head of the 30S subunit, it contacts several helices of the 16S rRNA. In the 70S ribosome it contacts the 23S rRNA (bridge B1a) and protein L5 of the 50S subunit (bridge B1b), connecting the 2 subunits; these bridges are implicated in subunit movement. Contacts the tRNAs in the A and P-sites. This Clostridium beijerinckii (strain ATCC 51743 / NCIMB 8052) (Clostridium acetobutylicum) protein is Small ribosomal subunit protein uS13.